A 544-amino-acid polypeptide reads, in one-letter code: Chaperonin GroEL (544 aa).

ATP-binding positions include 30–33 (TLGP), Lys51, 87–91 (DGTTT), Gly415, and Asp495.

This sequence belongs to the chaperonin (HSP60) family. In terms of assembly, forms a cylinder of 14 subunits composed of two heptameric rings stacked back-to-back. Interacts with the co-chaperonin GroES.

It is found in the cytoplasm. It catalyses the reaction ATP + H2O + a folded polypeptide = ADP + phosphate + an unfolded polypeptide.. Functionally, together with its co-chaperonin GroES, plays an essential role in assisting protein folding. The GroEL-GroES system forms a nano-cage that allows encapsulation of the non-native substrate proteins and provides a physical environment optimized to promote and accelerate protein folding. The sequence is that of Chaperonin GroEL from Neisseria meningitidis serogroup A / serotype 4A (strain DSM 15465 / Z2491).